A 707-amino-acid polypeptide reads, in one-letter code: Matrix metalloproteinase-9 (707 aa).

The first 19 residues, 1 to 19 (MSPRQPLVLALLVLGCCSA), serve as a signal peptide directing secretion. Residues 20–106 (APRRRQPTLV…PRCGVPDVGK (87 aa)) constitute a propeptide, activation peptide. N-linked (GlcNAc...) asparagine glycosylation is present at Asn88. The Cysteine switch motif lies at 97–104 (PRCGVPDV). Cys99 serves as a coordination point for Zn(2+). Asn120 and Asn127 each carry an N-linked (GlcNAc...) asparagine glycan. Residues Asp131 and Asp165 each contribute to the Ca(2+) site. Positions 175 and 177 each coordinate Zn(2+). Ca(2+)-binding residues include Asp182, Gly183, Asp185, and Leu187. His190 provides a ligand contact to Zn(2+). Gly197, Gln199, and Asp201 together coordinate Ca(2+). His203 provides a ligand contact to Zn(2+). Asp205, Asp206, and Glu208 together coordinate Ca(2+). Fibronectin type-II domains are found at residues 225-273 (ADGA…FCPS), 283-331 (ADGK…FCPT), and 342-390 (SAGE…FCPD). Cystine bridges form between Cys230–Cys256, Cys244–Cys271, Cys288–Cys314, Cys302–Cys329, Cys347–Cys373, and Cys361–Cys388. His401 lines the Zn(2+) pocket. Glu402 is an active-site residue. Zn(2+)-binding residues include His405 and His411. A disordered region spans residues 437-508 (RGIQHLYGPN…ASPSAAPTAS (72 aa)). The span at 446 to 467 (NPNPQPPATTTPEPQPTAPPTA) shows a compositional bias: pro residues. A compositionally biased stretch (low complexity) spans 481-493 (PTTSPTGAPSAGP). Cys516 and Cys704 are joined by a disulfide. 4 Hemopexin repeats span residues 518-563 (VNVF…WPAL), 564-608 (PAKL…GLGP), 610-657 (VPHV…FPGV), and 658-704 (PLNT…ILHC).

It belongs to the peptidase M10A family. As to quaternary structure, exists as monomer or homodimer; disulfide-linked. Also exists as heterodimer with LCN2. Macrophages and transformed cell lines produce only the monomeric form. Interacts with ECM1. Requires Zn(2+) as cofactor. It depends on Ca(2+) as a cofactor. In terms of processing, N- and O-glycosylated. In terms of tissue distribution, osteoclasts.

Its subcellular location is the secreted. It is found in the extracellular space. It localises to the extracellular matrix. The catalysed reaction is Cleavage of gelatin types I and V and collagen types IV and V.. Matrix metalloproteinase that plays an essential role in local proteolysis of the extracellular matrix and in leukocyte migration. Could play a role in bone osteoclastic resorption. Cleaves KiSS1 at a Gly-|-Leu bond. Cleaves NINJ1 to generate the Secreted ninjurin-1 form. Cleaves type IV and type V collagen into large C-terminal three quarter fragments and shorter N-terminal one quarter fragments. Degrades fibronectin but not laminin or Pz-peptide. The sequence is that of Matrix metalloproteinase-9 from Oryctolagus cuniculus (Rabbit).